The sequence spans 212 residues: Ribonuclease HII (212 aa).

One can recognise an RNase H type-2 domain in the interval 19 to 212 (CIIVGVDEVG…SKISYMFKNS (194 aa)). 3 residues coordinate a divalent metal cation: Asp-25, Glu-26, and Asp-120.

This sequence belongs to the RNase HII family. It depends on Mn(2+) as a cofactor. Requires Mg(2+) as cofactor.

The protein localises to the cytoplasm. The enzyme catalyses Endonucleolytic cleavage to 5'-phosphomonoester.. Endonuclease that specifically degrades the RNA of RNA-DNA hybrids. This is Ribonuclease HII from Ehrlichia ruminantium (strain Welgevonden).